The sequence spans 2282 residues: Cation channel sperm-associated targeting subunit tau (2282 aa).

The disordered stretch occupies residues 1–118; that stretch reads MELPPPGNRR…RGKGKGTGTR (118 aa). 2 stretches are compositionally biased toward polar residues: residues 11–41 and 50–87; these read VSIN…SLKR and MMSN…NLSS. Over residues 90–109 the composition is skewed to basic and acidic residues; the sequence is YADEEGKPLTDKNKDKDKGR. In terms of domain architecture, C2 spans 131–266; it reads QSDEMAIANQ…IQKGCFTEVM (136 aa). 10 disordered regions span residues 397 to 416, 656 to 679, 747 to 1066, 1104 to 1153, 1217 to 1240, 1426 to 1445, 1452 to 1515, 1542 to 1569, 1908 to 1928, and 2187 to 2222; these read MTKR…SSAL, EHED…TWAE, NKLI…SHDP, SAKS…DKQS, YTND…TDDR, NSLL…DSRS, RQNT…SLDK, ERRQ…LEKT, NQAN…LKKQ, and PKKS…EPNK. Polar residues-rich tracts occupy residues 750 to 760, 783 to 792, 800 to 841, 849 to 858, and 953 to 974; these read ITDSSFNTTKP, SDPSSNTTKP, DPSS…SDLN, IVSTISSDPN, and SARS…TKLS. Residues 1104–1123 show a composition bias toward low complexity; it reads SAKSLDSNNSSASSSPTVNS. Residues 1124–1136 show a composition bias toward polar residues; sequence DTTTNAAEPSGTK. Composition is skewed to polar residues over residues 1452–1466 and 1473–1482; these read RQNT…SSVS and DCQSISTQES. Over residues 1484–1493 the composition is skewed to basic and acidic residues; the sequence is YPVRDTKSDS. Acidic residues predominate over residues 1495-1504; the sequence is NDTEEMELDS. Composition is skewed to basic and acidic residues over residues 1542 to 1555 and 1916 to 1925; these read ERRQ…ESLI and SPERPSDISL.

Component of the CatSper complex or CatSpermasome composed of the core pore-forming members CATSPER1, CATSPER2, CATSPER3 and CATSPER4 as well as auxiliary members CATSPERB, CATSPERG, CATSPERD, CATSPERE, CATSPERZ, C2CD6/CATSPERT, SLCO6C1, TMEM249, TMEM262 and EFCAB9. HSPA1 may be an additional auxiliary complex member. The core complex members CATSPER1, CATSPER2, CATSPER3 and CATSPER4 form a heterotetrameric channel. The auxiliary CATSPERB, CATSPERG, CATSPERD and CATSPERE subunits form a pavilion-like structure over the pore which stabilizes the complex through interactions with CATSPER4, CATSPER3, CATSPER1 and CATSPER2 respectively. SLCO6C1 interacts with CATSPERE and TMEM262/CATSPERH interacts with CATSPERB, further stabilizing the complex. C2CD6/CATSPERT interacts at least with CATSPERD and is required for targeting the CatSper complex in the flagellar membrane. Expressed in cauda sperm (at protein level).

The protein resides in the cell projection. Its subcellular location is the cilium. The protein localises to the flagellum membrane. Auxiliary component of the CatSper complex, a complex involved in sperm cell hyperactivation. Sperm cell hyperactivation is needed for sperm motility which is essential late in the preparation of sperm for fertilization. Required for CatSper complex targeting and trafficking into the quadrilinear nanodomains. Targets the preassembled CatSper complexes to elongating flagella, where it links the channel-carrying vesicles and motor proteins. The protein is Cation channel sperm-associated targeting subunit tau of Mus musculus (Mouse).